A 40-amino-acid chain; its full sequence is Large ribosomal subunit protein bL36B (40 aa).

The protein belongs to the bacterial ribosomal protein bL36 family.

The chain is Large ribosomal subunit protein bL36B from Streptomyces coelicolor (strain ATCC BAA-471 / A3(2) / M145).